A 502-amino-acid polypeptide reads, in one-letter code: Bone morphogenetic protein receptor type-1B (502 aa).

The N-terminal stretch at 1-13 is a signal peptide; sequence MLLRSAGKLNVGT. The tract at residues 1–25 is disordered; the sequence is MLLRSAGKLNVGTKKEDGESTAPTP. The Extracellular portion of the chain corresponds to 14-126; it reads KKEDGESTAP…DFVDGPIHHR (113 aa). 5 disulfides stabilise this stretch: Cys32-Cys53, Cys34-Cys38, Cys47-Cys71, Cys81-Cys95, and Cys96-Cys102. The chain crosses the membrane as a helical span at residues 127-148; sequence ALLISVTVCSLLLVLIILFCYF. Residues 149 to 502 lie on the Cytoplasmic side of the membrane; sequence RYKRQETRPR…KMSESQDIKL (354 aa). Residues 174-203 form the GS domain; sequence ESLRDLIEQSQSSGSGSGLPLLVQRTIAKQ. Residues 204–494 form the Protein kinase domain; it reads IQMVKQIGKG…LRVKKTLAKM (291 aa). Residues 210–218 and Lys231 contribute to the ATP site; that span reads IGKGRYGEV. The Proton acceptor role is filled by Asp332.

It belongs to the protein kinase superfamily. TKL Ser/Thr protein kinase family. TGFB receptor subfamily. In terms of assembly, interacts with high affinity with GDF5; positively regulates chondrocyte differentiation. Interacts with SCUBE3. Interacts with TSC22D1/TSC-22. Interacts with TGFBR3. Mg(2+) serves as cofactor. Requires Mn(2+) as cofactor. Post-translationally, autophosphorylated.

Its subcellular location is the cell membrane. The enzyme catalyses L-threonyl-[receptor-protein] + ATP = O-phospho-L-threonyl-[receptor-protein] + ADP + H(+). The catalysed reaction is L-seryl-[receptor-protein] + ATP = O-phospho-L-seryl-[receptor-protein] + ADP + H(+). Its function is as follows. On ligand binding, forms a receptor complex consisting of two type II and two type I transmembrane serine/threonine kinases. Type II receptors phosphorylate and activate type I receptors which autophosphorylate, then bind and activate SMAD transcriptional regulators. Receptor for BMP7/OP-1 and GDF5. Positively regulates chondrocyte differentiation through GDF5 interaction. The chain is Bone morphogenetic protein receptor type-1B (BMPR1B) from Homo sapiens (Human).